The sequence spans 412 residues: Zinc finger protein 821 (412 aa).

The segment at 26–83 is disordered; that stretch reads RQAMMKTDFPGDLGSQRQAIQQLRDQDSSSSDSEGDEEETTQDEVSSHTSEEDGGVVK. The segment covering 58 to 67 has biased composition (acidic residues); that stretch reads SEGDEEETTQ. 2 C2H2-type zinc fingers span residues 116-140 and 150-172; these read GLCQ…VYQH and YMCP…LLIH. The stretch at 257 to 366 forms a coiled coil; the sequence is KWALRRQNEP…EKMDMMLRAQ (110 aa). Positions 278-319 are disordered; sequence RTAKKSRRDNETPEEREVRRMRDREAKRLQRMQETDEQRARR.

The protein belongs to the krueppel C2H2-type zinc-finger protein family.

The protein resides in the nucleus. May be involved in transcriptional regulation. This Bos taurus (Bovine) protein is Zinc finger protein 821 (ZNF821).